Here is a 450-residue protein sequence, read N- to C-terminus: Oxygen-independent coproporphyrinogen III oxidase (450 aa).

Residues 45-282 (IPAGGSISLY…RTLILWDGYQ (238 aa)) enclose the Radical SAM core domain. Residue tyrosine 54 participates in S-adenosyl-L-methionine binding. Residues cysteine 60 and cysteine 64 each contribute to the [4Fe-4S] cluster site. Phenylalanine 66 contributes to the S-adenosyl-L-methionine binding site. Residue cysteine 67 coordinates [4Fe-4S] cluster. S-adenosyl-L-methionine-binding positions include glycine 111, 112-113 (GT), glutamate 144, glutamine 171, arginine 183, aspartate 208, alanine 242, and isoleucine 328.

It belongs to the anaerobic coproporphyrinogen-III oxidase family. As to quaternary structure, monomer. Requires [4Fe-4S] cluster as cofactor.

The protein resides in the cytoplasm. It catalyses the reaction coproporphyrinogen III + 2 S-adenosyl-L-methionine = protoporphyrinogen IX + 2 5'-deoxyadenosine + 2 L-methionine + 2 CO2. It participates in porphyrin-containing compound metabolism; protoporphyrin-IX biosynthesis; protoporphyrinogen-IX from coproporphyrinogen-III (AdoMet route): step 1/1. Its function is as follows. Involved in the heme and chlorophyll biosynthesis. Catalyzes the anaerobic oxidative decarboxylation of propionate groups of rings A and B of coproporphyrinogen III to yield the vinyl groups in protoporphyrinogen IX. This chain is Oxygen-independent coproporphyrinogen III oxidase (hemZ), found in Cereibacter sphaeroides (strain ATCC 17023 / DSM 158 / JCM 6121 / CCUG 31486 / LMG 2827 / NBRC 12203 / NCIMB 8253 / ATH 2.4.1.) (Rhodobacter sphaeroides).